The sequence spans 236 residues: UPF0257 lipoprotein YnfC (236 aa).

A signal peptide spans 1 to 16 (MKYKLLPCLLAILLTG). Cysteine 17 is lipidated: N-palmitoyl cysteine. A lipid anchor (S-diacylglycerol cysteine) is attached at cysteine 17.

It belongs to the UPF0257 family.

The protein localises to the cell membrane. The polypeptide is UPF0257 lipoprotein YnfC (Escherichia coli O127:H6 (strain E2348/69 / EPEC)).